The primary structure comprises 256 residues: Imidazole glycerol phosphate synthase subunit HisF (256 aa).

Catalysis depends on residues Asp12 and Asp131.

This sequence belongs to the HisA/HisF family. As to quaternary structure, heterodimer of HisH and HisF.

It localises to the cytoplasm. It carries out the reaction 5-[(5-phospho-1-deoxy-D-ribulos-1-ylimino)methylamino]-1-(5-phospho-beta-D-ribosyl)imidazole-4-carboxamide + L-glutamine = D-erythro-1-(imidazol-4-yl)glycerol 3-phosphate + 5-amino-1-(5-phospho-beta-D-ribosyl)imidazole-4-carboxamide + L-glutamate + H(+). It participates in amino-acid biosynthesis; L-histidine biosynthesis; L-histidine from 5-phospho-alpha-D-ribose 1-diphosphate: step 5/9. IGPS catalyzes the conversion of PRFAR and glutamine to IGP, AICAR and glutamate. The HisF subunit catalyzes the cyclization activity that produces IGP and AICAR from PRFAR using the ammonia provided by the HisH subunit. The polypeptide is Imidazole glycerol phosphate synthase subunit HisF (Pseudomonas paraeruginosa (strain DSM 24068 / PA7) (Pseudomonas aeruginosa (strain PA7))).